Consider the following 89-residue polypeptide: Small ribosomal subunit protein uS15 (89 aa).

It belongs to the universal ribosomal protein uS15 family. Part of the 30S ribosomal subunit. Forms a bridge to the 50S subunit in the 70S ribosome, contacting the 23S rRNA.

In terms of biological role, one of the primary rRNA binding proteins, it binds directly to 16S rRNA where it helps nucleate assembly of the platform of the 30S subunit by binding and bridging several RNA helices of the 16S rRNA. Functionally, forms an intersubunit bridge (bridge B4) with the 23S rRNA of the 50S subunit in the ribosome. This is Small ribosomal subunit protein uS15 from Syntrophobacter fumaroxidans (strain DSM 10017 / MPOB).